We begin with the raw amino-acid sequence, 156 residues long: MPRRRVVGQRKILPDPKFHSELLAKFINVIMQDGKKSTAEKIIYKALDVIAEKKGANHLDILEAALDNVRPSVEVKSRRVGGSTYQVPCEVRPVRRNALAMRWLVEAARKRGEKSMALRLAGEMLDASENKGTAVKKREDVHRMAEANKAFAHYRW.

The protein belongs to the universal ribosomal protein uS7 family. Part of the 30S ribosomal subunit. Contacts proteins S9 and S11.

Functionally, one of the primary rRNA binding proteins, it binds directly to 16S rRNA where it nucleates assembly of the head domain of the 30S subunit. Is located at the subunit interface close to the decoding center, probably blocks exit of the E-site tRNA. The chain is Small ribosomal subunit protein uS7 from Shewanella sp. (strain MR-7).